The following is a 231-amino-acid chain: Protein OPG061 (231 aa).

The protein belongs to the orthopoxvirus OPG058 family.

Its subcellular location is the host nucleus. It is found in the host nucleolus. The protein is Protein OPG061 (OPG061) of Vaccinia virus (strain Western Reserve) (VACV).